A 260-amino-acid polypeptide reads, in one-letter code: Dehydrin ERD10 (260 aa).

Disordered stretches follow at residues methionine 1–lysine 187, lysine 197–leucine 216, and lysine 240–aspartate 260. Alanine 2 is modified (N-acetylalanine). Residues glutamate 26–proline 44 show a composition bias toward basic and acidic residues. The residue at position 61 (serine 61) is a Phosphoserine. 5 stretches are compositionally biased toward basic and acidic residues: residues valine 67 to histidine 102, isoleucine 130 to glutamate 140, aspartate 148 to glycine 162, serine 176 to lysine 187, and lysine 197 to aspartate 207. 2 tandem repeats follow at residues glutamate 184–lysine 204 and proline 227–lysine 247. Residues glutamate 184–lysine 247 form a 2 X 21 AA repeats, Lys-rich region.

This sequence belongs to the plant dehydrin family. In terms of tissue distribution, in stems, cauline leaves, roots and flowers. Low levels found in maturing seeds. Absent in dry seeds.

This Arabidopsis thaliana (Mouse-ear cress) protein is Dehydrin ERD10 (ERD10).